The chain runs to 141 residues: MKSKKQILRLRKRAEFLTVRNGEKRRGPLFLMAVRERTEEESNAAKTGDNPRVGFTVTKKNGNAVIRNRIRRRLKEAIRCHAGRDMAPSTDYVIVAREQALNAPFSQLTEELSRRITAKGERRSGGKRRTERPEPGPVNGK.

Disordered regions lie at residues 37–56 and 114–141; these read RTEE…VGFT and RRIT…VNGK. The span at 114–124 shows a compositional bias: basic and acidic residues; the sequence is RRITAKGERRS.

It belongs to the RnpA family. Consists of a catalytic RNA component (M1 or rnpB) and a protein subunit.

It carries out the reaction Endonucleolytic cleavage of RNA, removing 5'-extranucleotides from tRNA precursor.. Its function is as follows. RNaseP catalyzes the removal of the 5'-leader sequence from pre-tRNA to produce the mature 5'-terminus. It can also cleave other RNA substrates such as 4.5S RNA. The protein component plays an auxiliary but essential role in vivo by binding to the 5'-leader sequence and broadening the substrate specificity of the ribozyme. The chain is Ribonuclease P protein component from Brucella melitensis biotype 1 (strain ATCC 23456 / CCUG 17765 / NCTC 10094 / 16M).